The chain runs to 425 residues: MASSSPDSPCSCDCFVSVPPASAIPAVIFAKNSDRPRDEVQEVVFVPAGTHTPGSRLQCTYIEVEQVSKTHAVILSRPSWLWGAEMGANEHGVCIGNEAVWTKEPVGEGEALLGMDLLRLALERSSSAQEALHVITGLLEHYGQGGNCLEDAAPFSYHSTFLLADRTEAWVLETAGRLWAAQRIQEGARNISNQLSIGTDISAQHPELRTHAQAKGWWDGQGAFDFAQIFSLTQQPVRMEAAKARFQAGRELLRQRQGGITAEVMMGILRDKESGICMDSGGFRTTASMVSVLPQDPTQPCVHFLTATPDPSRSVFKPFIFGMGVAQAPQVLSPTFGAQDPVRTLPRFQTQVDRRHTLYRGHQAALGLMERDQDRGQQLQQKQQDLEQEGLEATQGLLAGEWAPPLWELGSLFQAFVKRESQAYA.

The active site involves Cys12. Thr52 carries the post-translational modification Phosphothreonine.

The protein belongs to the peptidase C69 family. Secernin subfamily.

This chain is Secernin-2 (SCRN2), found in Homo sapiens (Human).